Here is a 251-residue protein sequence, read N- to C-terminus: Early E1A protein (251 aa).

An interaction with RB1 in competition with E2F1 region spans residues 38–46 (ISLHNLFDV). The interval 74 to 136 (SADSGAASGD…NYVNIAEGAS (63 aa)) is interaction with UBE2I. The LXCXE motif, interaction with host RB1 and TMEM173/STING signature appears at 97 to 101 (LKCYE). The segment at 102 to 122 (EGLPPSGSEADEAEERAEEEE) is disordered. Positions 110–122 (EADEAEERAEEEE) are enriched in acidic residues. The segment at 150–170 (CRACDFHRGSSGNPEAMCALC) is a zinc-finger region. A PXDLS motif, CTBP-binding motif is present at residues 240 to 244 (PLNLS). The short motif at 246–250 (KRPKS) is the Nuclear localization signal element.

The protein belongs to the adenoviridae E1A protein family. Interacts with host UBE2I; this interaction interferes with polySUMOylation. Interacts with host RB1; this interaction induces the aberrant dissociation of RB1-E2F1 complex thereby disrupting the activity of RB1 and activating E2F1-regulated genes. Interacts with host ATF7; the interaction enhances ATF7-mediated viral transactivation activity which requires the zinc binding domains of both proteins. Isoform early E1A 32 kDa protein and isoform early E1A 26 kDa protein interact (via N-terminus) with CUL1 and E3 ubiquitin ligase RBX1; these interactions inhibit RBX1-CUL1-dependent elongation reaction of ubiquitin chains and attenuate ubiquitination of SCF(FBXW7) target proteins. Interacts (via PXLXP motif) with host ZMYND11/BS69 (via MYND-type zinc finger); this interaction inhibits E1A mediated transactivation. Interacts with host EP300; this interaction stimulates the acetylation of RB1 by recruiting EP300 and RB1 into a multimeric-protein complex. Interacts with host CTBP1 and CTBP2; this interaction seems to potentiate viral replication. Interacts with host DCAF7. Interacts with host DYRK1A. Interacts with host KPNA4; this interaction allows E1A import into the host nucleus. Interacts with host EP400; this interaction stabilizes MYC. Interacts with host TBP protein; this interaction probably disrupts the TBP-TATA complex. Interacts (via LXCXE motif) with host TMEM173/STING; this interaction impairs the ability of TMEM173/STING to sense cytosolic DNA and promote the production of type I interferon (IFN-alpha and IFN-beta). Interacts (via C-terminus) with host ZBED1/hDREF (via C-terminus); the interaction is direct.

Its subcellular location is the host nucleus. Its function is as follows. Plays a role in viral genome replication by driving entry of quiescent cells into the cell cycle. Stimulation of progression from G1 to S phase allows the virus to efficiently use the cellular DNA replicating machinery to achieve viral genome replication. E1A protein has both transforming and trans-activating activities. Induces the disassembly of the E2F1 transcription factor from RB1 by direct competition for the same binding site on RB1, with subsequent transcriptional activation of E2F1-regulated S-phase genes and of the E2 region of the adenoviral genome. Release of E2F1 leads to the ARF-mediated inhibition of MDM2 and causes TP53/p53 to accumulate because it is not targeted for degradation by MDM2-mediated ubiquitination anymore. This increase in TP53, in turn, would arrest the cell proliferation and direct its death but this effect is counteracted by the viral protein E1B-55K. Inactivation of the ability of RB1 to arrest the cell cycle is critical for cellular transformation, uncontrolled cellular growth and proliferation induced by viral infection. Interaction with RBX1 and CUL1 inhibits ubiquitination of the proteins targeted by SCF(FBXW7) ubiquitin ligase complex, and may be linked to unregulated host cell proliferation. The tumorigenesis-restraining activity of E1A may be related to the disruption of the host CtBP-CtIP complex through the CtBP binding motif. Interaction with host TMEM173/STING impairs the ability of TMEM173/STING to sense cytosolic DNA and promote the production of type I interferon (IFN-alpha and IFN-beta). Promotes the sumoylation of host ZBED1/hDREF with SUMO1. The polypeptide is Early E1A protein (Human adenovirus F serotype 41 (HAdV-41)).